Reading from the N-terminus, the 418-residue chain is Putative ion-transport protein YfeO (418 aa).

12 helical membrane passes run 10–30 (LLLS…LIVV), 54–74 (DSPL…GLVI), 99–119 (ALPG…SLGP), 120–140 (EHPI…RLLP), 149–169 (ILAS…AALI), 186–206 (LFAP…FFHP), 223–243 (ILSG…AVWC), 258–278 (VLVL…GGPV), 300–320 (DYFL…ASGF), 322–342 (GGRI…LHEH), 343–363 (VPAV…VLVV), and 371–391 (LFMA…CIVM).

Belongs to the chloride channel (TC 2.A.49) family.

The protein resides in the cell membrane. In Escherichia coli O139:H28 (strain E24377A / ETEC), this protein is Putative ion-transport protein YfeO.